A 576-amino-acid polypeptide reads, in one-letter code: DNA mismatch repair protein MutL (576 aa).

It belongs to the DNA mismatch repair MutL/HexB family.

Functionally, this protein is involved in the repair of mismatches in DNA. It is required for dam-dependent methyl-directed DNA mismatch repair. May act as a 'molecular matchmaker', a protein that promotes the formation of a stable complex between two or more DNA-binding proteins in an ATP-dependent manner without itself being part of a final effector complex. This chain is DNA mismatch repair protein MutL, found in Chlamydia trachomatis serovar A (strain ATCC VR-571B / DSM 19440 / HAR-13).